Consider the following 162-residue polypeptide: ATP synthase subunit b 1 (162 aa).

A helical transmembrane segment spans residues 1 to 21 (MLLTAEFWVAVAFVAFLVIVW).

The protein belongs to the ATPase B chain family. In terms of assembly, F-type ATPases have 2 components, F(1) - the catalytic core - and F(0) - the membrane proton channel. F(1) has five subunits: alpha(3), beta(3), gamma(1), delta(1), epsilon(1). F(0) has three main subunits: a(1), b(2) and c(10-14). The alpha and beta chains form an alternating ring which encloses part of the gamma chain. F(1) is attached to F(0) by a central stalk formed by the gamma and epsilon chains, while a peripheral stalk is formed by the delta and b chains.

Its subcellular location is the cell inner membrane. F(1)F(0) ATP synthase produces ATP from ADP in the presence of a proton or sodium gradient. F-type ATPases consist of two structural domains, F(1) containing the extramembraneous catalytic core and F(0) containing the membrane proton channel, linked together by a central stalk and a peripheral stalk. During catalysis, ATP synthesis in the catalytic domain of F(1) is coupled via a rotary mechanism of the central stalk subunits to proton translocation. Functionally, component of the F(0) channel, it forms part of the peripheral stalk, linking F(1) to F(0). This is ATP synthase subunit b 1 from Methylorubrum extorquens (strain PA1) (Methylobacterium extorquens).